We begin with the raw amino-acid sequence, 368 residues long: Anaphase-promoting complex subunit MND2 (368 aa).

2 disordered regions span residues 140–167 (AQNAEGNNEEDFRQHDSREEDPRNNGSI) and 286–336 (RNPY…GITP). A compositionally biased stretch (basic and acidic residues) spans 149-162 (EDFRQHDSREEDPR). The residue at position 293 (Ser-293) is a Phosphoserine.

This sequence belongs to the APC15 family. The APC/C is composed of at least 13 subunits that stay tightly associated throughout the cell cycle: APC1, APC2, APC4, APC5, APC9, APC11, CDC16, CDC23, CDC26, CDC27, DOC1, MND2 and SWM1. MND2 interacts directly with APC1, APC5 and CDC23.

It participates in protein modification; protein ubiquitination. Functionally, component of the anaphase promoting complex/cyclosome (APC/C), a cell cycle-regulated E3 ubiquitin-protein ligase complex that controls progression through mitosis and the G1 phase of the cell cycle. The APC/C is thought to confer substrate specificity and, in the presence of ubiquitin-conjugating E2 enzymes, it catalyzes the formation of protein-ubiquitin conjugates that are subsequently degraded by the 26S proteasome. In early mitosis, the APC/C is activated by CDC20 and targets securin PDS1, the B-type cyclin CLB5, and other anaphase inhibitory proteins for proteolysis, thereby triggering the separation of sister chromatids at the metaphase-to-anaphase transition. In late mitosis and in G1, degradation of CLB5 allows activation of the APC/C by CDH1, which is needed to destroy CDC20 and the B-type cyclin CLB2 to allow exit from mitosis and creating the low CDK state necessary for cytokinesis and for reforming prereplicative complexes in G1 prior to another round of replication. The polypeptide is Anaphase-promoting complex subunit MND2 (MND2) (Saccharomyces cerevisiae (strain ATCC 204508 / S288c) (Baker's yeast)).